A 164-amino-acid chain; its full sequence is Transcription elongation factor GreA (164 aa).

The stretch at 11 to 76 (EESYDRLKAE…LQELLNNAKV (66 aa)) forms a coiled coil.

This sequence belongs to the GreA/GreB family.

Necessary for efficient RNA polymerase transcription elongation past template-encoded arresting sites. The arresting sites in DNA have the property of trapping a certain fraction of elongating RNA polymerases that pass through, resulting in locked ternary complexes. Cleavage of the nascent transcript by cleavage factors such as GreA or GreB allows the resumption of elongation from the new 3'terminus. GreA releases sequences of 2 to 3 nucleotides. The sequence is that of Transcription elongation factor GreA from Mycolicibacterium vanbaalenii (strain DSM 7251 / JCM 13017 / BCRC 16820 / KCTC 9966 / NRRL B-24157 / PYR-1) (Mycobacterium vanbaalenii).